A 129-amino-acid chain; its full sequence is M-zodatoxin-Lt8b (129 aa).

The signal sequence occupies residues 1-20 (MKYFVVALALVAAFACIAES). A propeptide spanning residues 21–60 (KPAESEHELAEVEEENELADLEDAVWLEHLADLSDLEEAR) is cleaved from the precursor. Positions 57–60 (EEAR) match the Processing quadruplet motif motif.

In terms of processing, cleavage of the propeptide depends on the processing quadruplet motif (XXXR, with at least one of X being E). As to expression, expressed by the venom gland.

The protein localises to the secreted. Its function is as follows. Insecticidal, cytolytic and antimicrobial peptide. Forms voltage-dependent, ion-permeable channels in membranes. At high concentration causes cell membrane lysis. The protein is M-zodatoxin-Lt8b (cit 1-2) of Lachesana tarabaevi (Spider).